The chain runs to 276 residues: Malonyl-[acyl-carrier protein] O-methyltransferase (276 aa).

It belongs to the methyltransferase superfamily.

It carries out the reaction malonyl-[ACP] + S-adenosyl-L-methionine = malonyl-[ACP] methyl ester + S-adenosyl-L-homocysteine. It participates in cofactor biosynthesis; biotin biosynthesis. Converts the free carboxyl group of a malonyl-thioester to its methyl ester by transfer of a methyl group from S-adenosyl-L-methionine (SAM). It allows to synthesize pimeloyl-ACP via the fatty acid synthetic pathway. The chain is Malonyl-[acyl-carrier protein] O-methyltransferase from Paenibacillus sp. (strain JDR-2).